A 985-amino-acid polypeptide reads, in one-letter code: Invasin (985 aa).

Positions 494-594 (SVTVQQPQLT…RQSVDTHFVK (101 aa)) are D1. The Extracellular portion of the chain corresponds to 494-985 (SVTVQQPQLT…LAFPLCALAI (492 aa)). Big-1 domains follow at residues 503–594 (TLTA…HFVK) and 601–691 (KSTL…VNFT). Positions 595 to 694 (GTIAADKSTL…SVTVNFTADP (100 aa)) are D2. The interval 695–794 (IPDAGRSSFT…LQKKISLFPV (100 aa)) is D3. Positions 795 to 886 (PTLTGILVNG…YSVSYRFYPN (92 aa)) are D4. The segment at 795–985 (PTLTGILVNG…LAFPLCALAI (191 aa)) is integrin-binding. The segment at 887-985 (RWIYDGGTSL…LAFPLCALAI (99 aa)) is D5. Cysteine 906 and cysteine 981 are oxidised to a cystine.

The protein belongs to the intimin/invasin family.

The protein localises to the cell surface. Invasin is a protein that allows enteric bacteria to penetrate cultured mammalian cells. The entry of invasin in the cell is mediated by binding several beta-1 chain integrins. This chain is Invasin, found in Yersinia pseudotuberculosis serotype I (strain IP32953).